Reading from the N-terminus, the 1334-residue chain is MKKPYTIGLDIGTNSVGWAVLTDQYDLVKRKMKIAGDSEKKQIKKNFWGVRLFDEGQTAADRRMARTARRRIERRRNRISYLQGIFAEEMSKTDANFFCRLSDSFYVDNEKRNSRHPFFATIEEEVEYHKNYPTIYHLREELVNSSEKADLRLVYLALAHIIKYRGNFLIEGALDTQNTSVDGIYKQFIQTYNQVFASGIEDGSLKKLEDNKDVAKILVEKVTRKEKLERILKLYPGEKSAGMFAQFISLIVGSKGNFQKPFDLIEKSDIECAKDSYEEDLESLLALIGDEYAELFVAAKNAYSAVVLSSIITVAETETNAKLSASMIERFDTHEEDLGELKAFIKLHLPKHYEEIFSNTEKHGYAGYIDGKTKQADFYKYMKMTLENIEGADYFIAKIEKENFLRKQRTFDNGAIPHQLHLEELEAILHQQAKYYPFLKENYDKIKSLVTFRIPYFVGPLANGQSEFAWLTRKADGEIRPWNIEEKVDFGKSAVDFIEKMTNKDTYLPKENVLPKHSLCYQKYLVYNELTKVRYINDQGKTSYFSGQEKEQIFNDLFKQKRKVKKKDLELFLRNMSHVESPTIEGLEDSFNSSYSTYHDLLKVGIKQEILDNPVNTEMLENIVKILTVFEDKRMIKEQLQQFSDVLDGVVLKKLERRHYTGWGRLSAKLLMGIRDKQSHLTILDYLMNDDGLNRNLMQLINDSNLSFKSIIEKEQVTTADKDIQSIVADLAGSPAIKKGILQSLKIVDELVSVMGYPPQTIVVEMARENQTTGKGKNNSRPRYKSLEKAIKEFGSQILKEHPTDNQELRNNRLYLYYLQNGKDMYTGQDLDIHNLSNYDIDHIVPQSFITDNSIDNLVLTSSAGNREKGDDVPPLEIVRKRKVFWEKLYQGNLMSKRKFDYLTKAERGGLTEADKARFIHRQLVETRQITKNVANILHQRFNYEKDDHGNTMKQVRIVTLKSALVSQFRKQFQLYKVRDVNDYHHAHDAYLNGVVANTLLKVYPQLEPEFVYGDYHQFDWFKANKATAKKQFYTNIMLFFAQKDRIIDENGEILWDKKYLDTVKKVMSYRQMNIVKKTEIQKGEFSKATIKPKGNSSKLIPRKTNWDPMKYGGLDSPNMAYAVVIEYAKGKNKLVFEKKIIRVTIMERKAFEKDEKAFLEEQGYRQPKVLAKLPKYTLYECEEGRRRMLASANEAQKGNQQVLPNHLVTLLHHAANCEVSDGKSLDYIESNREMFAELLAHVSEFAKRYTLAEANLNKINQLFEQNKEGDIKAIAQSFVDLMAFNAMGAPASFKFFETTIERKRYNNLKELLNSTIIYQSITGLYESRKRLDD.

Asp-10 serves as the catalytic For RuvC-like nuclease domain. Residues Asp-10, Glu-765, and Glu-769 each coordinate Mn(2+). The HNH Cas9-type domain occupies 773-924; sequence TGKGKNNSRP…DKARFIHRQL (152 aa). His-843 (proton acceptor for HNH nuclease domain) is an active-site residue. Residue His-986 coordinates Mn(2+).

Belongs to the CRISPR-associated protein Cas9 family. Subtype II-A subfamily. As to quaternary structure, monomer. Binds crRNA and tracrRNA. Requires Mg(2+) as cofactor.

Functionally, CRISPR (clustered regularly interspaced short palindromic repeat) is an adaptive immune system that provides protection against mobile genetic elements (viruses, transposable elements and conjugative plasmids). CRISPR clusters contain spacers, sequences complementary to antecedent mobile elements, and target invading nucleic acids. CRISPR clusters are transcribed and processed into CRISPR RNA (crRNA). In type II CRISPR systems correct processing of pre-crRNA requires a trans-encoded small RNA (tracrRNA), endogenous ribonuclease 3 (rnc) and this protein. The tracrRNA serves as a guide for ribonuclease 3-aided processing of pre-crRNA. Subsequently Cas9/crRNA/tracrRNA endonucleolytically cleaves linear or circular dsDNA target complementary to the spacer; Cas9 is inactive in the absence of the 2 guide RNAs (gRNA). Cas9 recognizes the protospacer adjacent motif (PAM) in the CRISPR repeat sequences to help distinguish self versus nonself, as targets within the bacterial CRISPR locus do not have PAMs. PAM recognition is also required for catalytic activity. In Listeria innocua serovar 6a (strain ATCC BAA-680 / CLIP 11262), this protein is CRISPR-associated endonuclease Cas9.